Here is a 65-residue protein sequence, read N- to C-terminus: Subtilisin inhibitor CLSI-I (65 aa).

Belongs to the protease inhibitor I13 (potato type I serine protease inhibitor) family.

Its function is as follows. Inhibits subtilisin-type microbial serine proteases including proteinase K, subtilisin BPN', subtilisin Carlsberg, subtilisin E, A.oryzae protease and S.griseus alkaline protease. Weakly inhibits pronase E. Does not inhibit trypsin or chymotrypsin. The protein is Subtilisin inhibitor CLSI-I of Canavalia lineata (Beach bean).